We begin with the raw amino-acid sequence, 550 residues long: MVGEEKMSLRNRLSKSRENPEEDEDQRKPAKESLEAPSNGRIDIKQLIAKKIKLTAEAEELKPFFMKEVGSHFDDFVTNLIEKSASLDNGGCALTTFSILEGEKNNHRAKDLRAPPEQGKIFIARRSLLDELLEVDHIRTIYHMFIALLILFILSTLVVDYIDEGRLVLEFSLLSYAFGKFPTVVWTWWIMFLSTFSVPYFLFQRWATGYSKSSHPLINSLFHGFLFMVFQIGILGFGPTYVVLAYTLPPASRFIIIFEQIRFVMKAHSFVRENVPRVLNSAKEKSSTVPIPTVNQYLYFLFAPTLIYRDSYPRNPTVRWGYVAMQFAQVFGCFFYVYYIFERLCAPLFRNIKQEPFSARVLVLCVFNSILPGVLILFLTFFAFLHCWLNAFAEMLRFGDRMFYKDWWNSTSYSNYYRTWNVVVHDWLYYYAYKDFLWFFSKRFKSAAMLAVFAVSAVVHEYALAVCLSFFYPVLFVLFMFFGMAFNFIVNDSRKKPIWNVMMWTSLFLGNGVLLCFYSQEWYARQHCPLKNPTFLDYVRPRSWTCRYVF.

Met-1 carries the N-acetylmethionine modification. The interval 1–36 (MVGEEKMSLRNRLSKSRENPEEDEDQRKPAKESLEA) is disordered. The Cytoplasmic portion of the chain corresponds to 1–138 (MVGEEKMSLR…LDELLEVDHI (138 aa)). Phosphoserine is present on Ser-8. The segment covering 15–34 (KSRENPEEDEDQRKPAKESL) has biased composition (basic and acidic residues). His-137 provides a ligand contact to cholesterol. The chain crosses the membrane as a helical span at residues 139–160 (RTIYHMFIALLILFILSTLVVD). Over 161-180 (YIDEGRLVLEFSLLSYAFGK) the chain is Lumenal. A helical transmembrane segment spans residues 181–206 (FPTVVWTWWIMFLSTFSVPYFLFQRW). Over 207-218 (ATGYSKSSHPLI) the chain is Cytoplasmic. A helical transmembrane segment spans residues 219–244 (NSLFHGFLFMVFQIGILGFGPTYVVL). Residues 245–252 (AYTLPPAS) are Lumenal-facing. A helical membrane pass occupies residues 253–276 (RFIIIFEQIRFVMKAHSFVRENVP). At 277–319 (RVLNSAKEKSSTVPIPTVNQYLYFLFAPTLIYRDSYPRNPTVR) the chain is on the cytoplasmic side. Residues 320–352 (WGYVAMQFAQVFGCFFYVYYIFERLCAPLFRNI) traverse the membrane as a helical segment. Residues 353–369 (KQEPFSARVLVLCVFNS) lie on the Lumenal side of the membrane. A helical membrane pass occupies residues 370-395 (ILPGVLILFLTFFAFLHCWLNAFAEM). Residues 396–443 (LRFGDRMFYKDWWNSTSYSNYYRTWNVVVHDWLYYYAYKDFLWFFSKR) lie on the Cytoplasmic side of the membrane. Positions 403–409 (FYKDWWN) match the FYXDWWN motif motif. An acyl-CoA is bound by residues Asn-415, Arg-418, Asn-421, His-425, Tyr-433, Lys-445, and Ser-456. Residues 444–468 (FKSAAMLAVFAVSAVVHEYALAVCL) traverse the membrane as a helical segment. Residue His-460 is part of the active site. The Lumenal portion of the chain corresponds to 469–474 (SFFYPV). Residues 475 to 490 (LFVLFMFFGMAFNFIV) form a helical membrane-spanning segment. Residues 491–496 (NDSRKK) are Cytoplasmic-facing. A helical transmembrane segment spans residues 497–528 (PIWNVMMWTSLFLGNGVLLCFYSQEWYARQHC). A disulfide bridge links Cys-528 with Cys-546. Topologically, residues 529-550 (PLKNPTFLDYVRPRSWTCRYVF) are lumenal.

Belongs to the membrane-bound acyltransferase family. Sterol o-acyltransferase subfamily. May form homo- or heterodimers. Interacts with UBIAD1. Expressed in most tissues, but most strongly in the adrenal gland. Expressed more strongly in liver Kupffer cells than in hepatocytes.

It localises to the endoplasmic reticulum membrane. It catalyses the reaction a sterol + a long-chain fatty acyl-CoA = a long-chain 3-hydroxysterol ester + CoA. The enzyme catalyses cholesterol + an acyl-CoA = a cholesterol ester + CoA. The catalysed reaction is cholesterol + (9Z)-octadecenoyl-CoA = cholesteryl (9Z-octadecenoate) + CoA. It carries out the reaction cholesterol + hexadecanoyl-CoA = cholesteryl hexadecanoate + CoA. It catalyses the reaction octadecanoyl-CoA + cholesterol = cholesteryl octadecanoate + CoA. The enzyme catalyses (9Z,12Z)-octadecadienoyl-CoA + cholesterol = cholesteryl (9Z,12Z)-octadecadienoate + CoA. The catalysed reaction is (5Z,8Z,11Z,14Z)-eicosatetraenoyl-CoA + cholesterol = cholesteryl (5Z,8Z,11Z,14Z)-eicosatetraenoate + CoA. It carries out the reaction (9Z)-hexadecenoyl-CoA + cholesterol = cholesteryl (9Z)-hexadecenoate + CoA. It catalyses the reaction (11Z)-octadecenoyl-CoA + cholesterol = cholesteryl (11Z)-octadecenoate + CoA. The enzyme catalyses (7Z)-octadecenoyl-CoA + cholesterol = cholesteryl (7Z)-octadecenoate + CoA. Functionally, catalyzes the formation of fatty acid-cholesterol esters, which are less soluble in membranes than cholesterol. Plays a role in lipoprotein assembly and dietary cholesterol absorption. Preferentially utilizes oleoyl-CoA ((9Z)-octadecenoyl-CoA) as a substrate: shows a higher activity towards an acyl-CoA substrate with a double bond at the delta-9 position (9Z) than towards saturated acyl-CoA or an unsaturated acyl-CoA with a double bond at the delta-7 (7Z) or delta-11 (11Z) positions. The polypeptide is Sterol O-acyltransferase 1 (SOAT1) (Chlorocebus aethiops (Green monkey)).